We begin with the raw amino-acid sequence, 44 residues long: Antibacterial protein 3 (44 aa).

Met1 bears the N-formylmethionine mark.

It belongs to the staphylococcal hemolytic protein family.

It is found in the secreted. Functionally, has hemolytic activity and also inhibits the growth of gonococci. This is Antibacterial protein 3 from Staphylococcus haemolyticus.